The primary structure comprises 628 residues: Biosynthetic arginine decarboxylase (628 aa).

N6-(pyridoxal phosphate)lysine is present on Lys99. Val279 to Tyr289 lines the substrate pocket.

This sequence belongs to the Orn/Lys/Arg decarboxylase class-II family. SpeA subfamily. Requires Mg(2+) as cofactor. It depends on pyridoxal 5'-phosphate as a cofactor.

The catalysed reaction is L-arginine + H(+) = agmatine + CO2. The protein operates within amine and polyamine biosynthesis; agmatine biosynthesis; agmatine from L-arginine: step 1/1. Its function is as follows. Catalyzes the biosynthesis of agmatine from arginine. In Xylella fastidiosa (strain M12), this protein is Biosynthetic arginine decarboxylase.